The chain runs to 103 residues: Small ribosomal subunit protein uS10 (103 aa).

This sequence belongs to the universal ribosomal protein uS10 family. Part of the 30S ribosomal subunit.

Its function is as follows. Involved in the binding of tRNA to the ribosomes. The chain is Small ribosomal subunit protein uS10 from Bordetella avium (strain 197N).